A 137-amino-acid polypeptide reads, in one-letter code: MPTINQLVKTNRKAKTWKTKAPALNRGVNSLKKKVTKVSAPQKRGVCTRVATMTPKKPNSALRKYARVRLTNGMEVNAYIPGEGHNLQEHSVVLIRGGRVKDLPGVRYHIIRGTLDTQAVNNRKQSRSLYGAKRPKK.

Aspartate 102 bears the 3-methylthioaspartic acid mark.

It belongs to the universal ribosomal protein uS12 family. In terms of assembly, part of the 30S ribosomal subunit. Contacts proteins S8 and S17. May interact with IF1 in the 30S initiation complex.

Functionally, with S4 and S5 plays an important role in translational accuracy. Interacts with and stabilizes bases of the 16S rRNA that are involved in tRNA selection in the A site and with the mRNA backbone. Located at the interface of the 30S and 50S subunits, it traverses the body of the 30S subunit contacting proteins on the other side and probably holding the rRNA structure together. The combined cluster of proteins S8, S12 and S17 appears to hold together the shoulder and platform of the 30S subunit. The polypeptide is Small ribosomal subunit protein uS12 (Mesoplasma florum (strain ATCC 33453 / NBRC 100688 / NCTC 11704 / L1) (Acholeplasma florum)).